A 100-amino-acid chain; its full sequence is Small ribosomal subunit protein uS14c (100 aa).

Belongs to the universal ribosomal protein uS14 family. As to quaternary structure, part of the 30S ribosomal subunit.

It is found in the plastid. The protein localises to the chloroplast. Binds 16S rRNA, required for the assembly of 30S particles. The sequence is that of Small ribosomal subunit protein uS14c from Chlorella vulgaris (Green alga).